Reading from the N-terminus, the 180-residue chain is UPF0227 protein Ent638_1623 (180 aa).

The protein belongs to the UPF0227 family.

In Enterobacter sp. (strain 638), this protein is UPF0227 protein Ent638_1623.